Here is a 115-residue protein sequence, read N- to C-terminus: DNA-binding protein TV0008 (115 aa).

The tract at residues 18–37 (LQRQAMQRQMAEEEEKQREI) is disordered.

Belongs to the PDCD5 family.

This is DNA-binding protein TV0008 from Thermoplasma volcanium (strain ATCC 51530 / DSM 4299 / JCM 9571 / NBRC 15438 / GSS1).